Consider the following 719-residue polypeptide: UvrABC system protein B (719 aa).

A Helicase ATP-binding domain is found at 49-435 (RRINAGERDV…TGGEFVEQVI (387 aa)). 62–69 (GATGTGKS) is an ATP binding site. The Beta-hairpin motif lies at 115–138 (YYDYYQPEAYIAQTDTYIEKDSSI). In terms of domain architecture, Helicase C-terminal spans 453-606 (QIDDLIGEIR…QIAYNEANGI (154 aa)). The tract at residues 635–654 (GGSGRNASRGRRAQGEPGRA) is disordered. A UVR domain is found at 674-709 (ADLIKDLTAQMMAAARDLQFELAARFRDEIADLKRE).

This sequence belongs to the UvrB family. Forms a heterotetramer with UvrA during the search for lesions. Interacts with UvrC in an incision complex.

The protein localises to the cytoplasm. In terms of biological role, the UvrABC repair system catalyzes the recognition and processing of DNA lesions. A damage recognition complex composed of 2 UvrA and 2 UvrB subunits scans DNA for abnormalities. Upon binding of the UvrA(2)B(2) complex to a putative damaged site, the DNA wraps around one UvrB monomer. DNA wrap is dependent on ATP binding by UvrB and probably causes local melting of the DNA helix, facilitating insertion of UvrB beta-hairpin between the DNA strands. Then UvrB probes one DNA strand for the presence of a lesion. If a lesion is found the UvrA subunits dissociate and the UvrB-DNA preincision complex is formed. This complex is subsequently bound by UvrC and the second UvrB is released. If no lesion is found, the DNA wraps around the other UvrB subunit that will check the other stand for damage. The sequence is that of UvrABC system protein B from Mycobacterium tuberculosis (strain CDC 1551 / Oshkosh).